The primary structure comprises 318 residues: Ubiquinone biosynthesis protein COQ9, mitochondrial (318 aa).

The transit peptide at 1-44 directs the protein to the mitochondrion; sequence MAAAAVSGALGRAGWRLLQLRCLPVARCRQALVPRAFHASAVGL. Residues 16-31 carry the SIFI-degron motif; that stretch reads RLLQLRCLPVARCRQA. Residues 44 to 98 are disordered; the sequence is LRSSDEQKQQPPNSFSQQHSETQGAEKPDPESSHSPPRYTDQGGEEEEDYESEEQ. A compositionally biased stretch (polar residues) spans 52–66; the sequence is QQPPNSFSQQHSETQ. The span at 86-97 shows a compositional bias: acidic residues; it reads GGEEEEDYESEE. Residue Lys-175 is modified to N6-acetyllysine. Residue Arg-244 coordinates a 1,2-diacylglycero-3-phosphoethanolamine.

Belongs to the COQ9 family. In terms of assembly, homodimer. Heterodimer; two heterodimers of COQ7:COQ9 come together on the same side of the lipid pseudo-bilayer and form a curved tetramer with a hydrophobic surface suitable for membrane interaction. These two tetramers assemble into a soluble octamer with a pseudo-bilayer of lipids captured within. Interacts with COQ7; this interaction allows ubiquinone (CoQ) isoprene intermediates presentation to COQ7 and facilitates the COQ7-mediated hydroxylase step. In response to mitochondrial stress, the precursor protein is ubiquitinated by the SIFI complex in the cytoplasm before mitochondrial import, leading to its degradation. Within the SIFI complex, UBR4 initiates ubiquitin chain that are further elongated or branched by KCMF1.

It localises to the mitochondrion. It functions in the pathway cofactor biosynthesis; ubiquinone biosynthesis. Membrane-associated protein that warps the membrane surface to access and bind aromatic isoprenes with high specificity, including ubiquinone (CoQ) isoprene intermediates and presents them directly to COQ7, therefore facilitating the COQ7-mediated hydroxylase step. Participates in the biosynthesis of coenzyme Q, also named ubiquinone, an essential lipid-soluble electron transporter for aerobic cellular respiration. This chain is Ubiquinone biosynthesis protein COQ9, mitochondrial, found in Homo sapiens (Human).